The primary structure comprises 416 residues: Succinate--CoA ligase [ADP-forming] subunit beta (416 aa).

The N-terminal 14 residues, 1–14 (MLRMAPKTVGAVRN), are a transit peptide targeting the hydrogenosome. Residues K64, 71–73 (GRG), and E132 contribute to the ATP site. The Mg(2+) site is built by N224 and D242. Substrate contacts are provided by residues N293 and 350 to 352 (GIM).

Belongs to the succinate/malate CoA ligase beta subunit family. In terms of assembly, heterodimer of an alpha and a beta subunit. The cofactor is Mg(2+).

The protein localises to the hydrogenosome. It carries out the reaction succinate + ATP + CoA = succinyl-CoA + ADP + phosphate. Its pathway is carbohydrate metabolism; tricarboxylic acid cycle; succinate from succinyl-CoA (ligase route): step 1/1. Its function is as follows. Succinyl-CoA synthetase functions in the citric acid cycle (TCA), coupling the hydrolysis of succinyl-CoA to the synthesis of ATP and thus represents the only step of substrate-level phosphorylation in the TCA. The beta subunit provides nucleotide specificity of the enzyme and binds the substrate succinate, while the binding sites for coenzyme A and phosphate are found in the alpha subunit. This Blastocystis sp. subtype 1 (strain ATCC 50177 / NandII) protein is Succinate--CoA ligase [ADP-forming] subunit beta (SCSb).